We begin with the raw amino-acid sequence, 411 residues long: Arginine deiminase (411 aa).

Residue Cys-401 is the Amidino-cysteine intermediate of the active site.

The protein belongs to the arginine deiminase family.

The protein localises to the cytoplasm. The catalysed reaction is L-arginine + H2O = L-citrulline + NH4(+). Its pathway is amino-acid degradation; L-arginine degradation via ADI pathway; carbamoyl phosphate from L-arginine: step 1/2. This chain is Arginine deiminase, found in Staphylococcus aureus (strain JH9).